Consider the following 222-residue polypeptide: uncharacterized protein (222 aa).

Residues Ile7 to Gln26 form a helical membrane-spanning segment. Residues Cys139–Lys222 enclose the SPOR domain.

Its subcellular location is the membrane. This is an uncharacterized protein from Rickettsia prowazekii (strain Madrid E).